A 154-amino-acid chain; its full sequence is Large ribosomal subunit protein uL13 (154 aa).

It belongs to the universal ribosomal protein uL13 family. In terms of assembly, part of the 50S ribosomal subunit.

Functionally, this protein is one of the early assembly proteins of the 50S ribosomal subunit, although it is not seen to bind rRNA by itself. It is important during the early stages of 50S assembly. This Rhizobium meliloti (strain 1021) (Ensifer meliloti) protein is Large ribosomal subunit protein uL13.